The sequence spans 384 residues: 8-amino-7-oxononanoate synthase (384 aa).

R21 is a substrate binding site. 108–109 (GF) contributes to the pyridoxal 5'-phosphate binding site. H133 contributes to the substrate binding site. Pyridoxal 5'-phosphate is bound by residues S179, H207, and T233. K236 carries the post-translational modification N6-(pyridoxal phosphate)lysine. A substrate-binding site is contributed by T352.

Belongs to the class-II pyridoxal-phosphate-dependent aminotransferase family. BioF subfamily. In terms of assembly, homodimer. The cofactor is pyridoxal 5'-phosphate.

It carries out the reaction 6-carboxyhexanoyl-[ACP] + L-alanine + H(+) = (8S)-8-amino-7-oxononanoate + holo-[ACP] + CO2. Its pathway is cofactor biosynthesis; biotin biosynthesis. Functionally, catalyzes the decarboxylative condensation of pimeloyl-[acyl-carrier protein] and L-alanine to produce 8-amino-7-oxononanoate (AON), [acyl-carrier protein], and carbon dioxide. This Shigella dysenteriae serotype 1 (strain Sd197) protein is 8-amino-7-oxononanoate synthase.